The sequence spans 394 residues: Elongation factor Tu 2 (394 aa).

In terms of domain architecture, tr-type G spans 10 to 204; the sequence is KPHVNVGTIG…ALDTYIPEPA (195 aa). The interval 19–26 is G1; it reads GHVDHGKT. 19–26 contacts GTP; sequence GHVDHGKT. Mg(2+) is bound at residue Thr26. Positions 60–64 are G2; it reads GITIN. The tract at residues 81-84 is G3; sequence DCPG. Residues 81 to 85 and 136 to 139 contribute to the GTP site; these read DCPGH and NKCD. Positions 136–139 are G4; it reads NKCD. Residues 174-176 form a G5 region; it reads SAL.

The protein belongs to the TRAFAC class translation factor GTPase superfamily. Classic translation factor GTPase family. EF-Tu/EF-1A subfamily. In terms of assembly, monomer.

The protein localises to the cytoplasm. It carries out the reaction GTP + H2O = GDP + phosphate + H(+). Its function is as follows. GTP hydrolase that promotes the GTP-dependent binding of aminoacyl-tRNA to the A-site of ribosomes during protein biosynthesis. This Shewanella frigidimarina (strain NCIMB 400) protein is Elongation factor Tu 2.